We begin with the raw amino-acid sequence, 75 residues long: Small ribosomal subunit protein bS18 (75 aa).

The protein belongs to the bacterial ribosomal protein bS18 family. As to quaternary structure, part of the 30S ribosomal subunit. Forms a tight heterodimer with protein bS6.

Binds as a heterodimer with protein bS6 to the central domain of the 16S rRNA, where it helps stabilize the platform of the 30S subunit. In Aliivibrio fischeri (strain ATCC 700601 / ES114) (Vibrio fischeri), this protein is Small ribosomal subunit protein bS18.